Here is a 184-residue protein sequence, read N- to C-terminus: Serine recombinase PinE (184 aa).

The region spanning 1–134 (MLIGYVRVST…AGLETARAQG (134 aa)) is the Resolvase/invertase-type recombinase catalytic domain. Residue serine 9 is the O-(5'-phospho-DNA)-serine intermediate of the active site. The segment at residues 161 to 180 (RQKVAIIYDVGVSTLYKRFP) is a DNA-binding region (H-T-H motif).

The protein belongs to the site-specific recombinase resolvase family.

This protein catalyzes the inversion of an 1800-bp E.coli DNA fragment, the P region, which can exist in either orientation. The function of the inversion is not yet clear. The protein is Serine recombinase PinE (pinE) of Escherichia coli (strain K12).